The chain runs to 588 residues: L-fucose isomerase (588 aa).

Residues glutamate 335 and aspartate 359 each act as proton acceptor in the active site. 3 residues coordinate Mn(2+): glutamate 335, aspartate 359, and histidine 525.

The protein belongs to the L-fucose isomerase family. Requires Mn(2+) as cofactor.

It is found in the cytoplasm. The enzyme catalyses L-fucose = L-fuculose. Its pathway is carbohydrate degradation; L-fucose degradation; L-lactaldehyde and glycerone phosphate from L-fucose: step 1/3. In terms of biological role, converts the aldose L-fucose into the corresponding ketose L-fuculose. The protein is L-fucose isomerase of Streptococcus pneumoniae (strain Taiwan19F-14).